The following is a 225-amino-acid chain: Cell division protein SepF (225 aa).

Positions 22 to 116 (EYLDEPEPAR…TRGALAVDTR (95 aa)) are disordered. 2 stretches are compositionally biased toward basic and acidic residues: residues 28–54 (EPARRPARPARDSGRDPYLDRDDRDFA) and 77–86 (RYDGPRHSSR).

The protein belongs to the SepF family. In terms of assembly, homodimer. Interacts with FtsZ.

It is found in the cytoplasm. Functionally, cell division protein that is part of the divisome complex and is recruited early to the Z-ring. Probably stimulates Z-ring formation, perhaps through the cross-linking of FtsZ protofilaments. Its function overlaps with FtsA. The chain is Cell division protein SepF from Rhodococcus jostii (strain RHA1).